The sequence spans 423 residues: Testin (423 aa).

Disordered stretches follow at residues 1 to 21 and 138 to 169; these read MSAT…ACAS and EKQP…PSKC. The PET domain maps to 97-204; it reads MILTNPVAAK…GDVKFPSEMN (108 aa). A compositionally biased stretch (basic and acidic residues) spans 160–169; that stretch reads PAHDQDPSKC. LIM zinc-binding domains are found at residues 236 to 299, 301 to 361, and 364 to 423; these read YSCY…CDSE, PRCA…NHAV, and QGCH…RMMS.

The protein belongs to the prickle / espinas / testin family. In terms of assembly, interacts via LIM domain 1 with ZYX. Interacts (via LIM domain 3) with ENAH and VASP. Interacts with ALKBH4, talin, actin, alpha-actinin, GRIP1 and PXN. Interacts (via LIM domain 2) with ACTL7A (via N-terminus). Heterodimer with ACTL7A; the heterodimer interacts with ENAH to form a heterotrimer. In terms of tissue distribution, detected at the acrosome of round spermatids (at protein level). Isoform TES1 transcript is highly expressed in adult testis and detected at low levels in other tissues. Isoform TES2 transcript is highly expressed in testis, kidney and spleen; intermediate in thymus, submaxillary gland and lung; detected at low levels in other tissues.

It localises to the cytoplasm. The protein resides in the cell junction. The protein localises to the focal adhesion. Its function is as follows. Scaffold protein that may play a role in cell adhesion, cell spreading and in the reorganization of the actin cytoskeleton. Plays a role in the regulation of cell proliferation. May act as a tumor suppressor. In Mus musculus (Mouse), this protein is Testin (Tes).